The following is a 275-amino-acid chain: MTSTSNLIEQVIEAWQNMQAKTPLVQCITNSVAANYTANVLLASGASPAMIDNPYEAESFTKISSALSINLGTPTSEQMQAMQISAKTAQLNNVPWVLDPVGYGPILAWRSQMTDELLQFKPSVIRGNASEISTLAGNQVQSKGVDSTLSSDQAYQQAFSLLTHASCIAISGESDYILSNEVDAVIQVNGGSPLQPKITATGCALGALIAAYSAVTTPTIAALSAHIHFAIAGKLAANQAQTMGSFSSIFMDYIHMLDANLIEQYADIKLLNKQA.

Met-50 lines the substrate pocket. ATP-binding residues include Arg-126 and Ser-171. Position 200 (Ala-200) interacts with substrate.

It belongs to the Thz kinase family. Requires Mg(2+) as cofactor.

The catalysed reaction is 5-(2-hydroxyethyl)-4-methylthiazole + ATP = 4-methyl-5-(2-phosphooxyethyl)-thiazole + ADP + H(+). The protein operates within cofactor biosynthesis; thiamine diphosphate biosynthesis; 4-methyl-5-(2-phosphoethyl)-thiazole from 5-(2-hydroxyethyl)-4-methylthiazole: step 1/1. Catalyzes the phosphorylation of the hydroxyl group of 4-methyl-5-beta-hydroxyethylthiazole (THZ). The polypeptide is Hydroxyethylthiazole kinase (Acinetobacter baumannii (strain ATCC 17978 / DSM 105126 / CIP 53.77 / LMG 1025 / NCDC KC755 / 5377)).